The primary structure comprises 201 residues: Ribosome maturation factor RimP (201 aa).

Residues 180–201 (LRRGSAPAQDEEGEDEAPGAPL) are disordered. A compositionally biased stretch (acidic residues) spans 188 to 201 (QDEEGEDEAPGAPL).

It belongs to the RimP family.

Its subcellular location is the cytoplasm. Its function is as follows. Required for maturation of 30S ribosomal subunits. The polypeptide is Ribosome maturation factor RimP (Methylobacterium sp. (strain 4-46)).